The chain runs to 261 residues: Ribonuclease PH (261 aa).

Phosphate contacts are provided by residues Arg88 and 126–128; that span reads GTR. The interval 242–261 is disordered; the sequence is PYPGVLPEPKNPEPKKKFGA. Residues 251–261 show a composition bias toward basic and acidic residues; the sequence is KNPEPKKKFGA.

It belongs to the RNase PH family. In terms of assembly, homohexameric ring arranged as a trimer of dimers.

It catalyses the reaction tRNA(n+1) + phosphate = tRNA(n) + a ribonucleoside 5'-diphosphate. Functionally, phosphorolytic 3'-5' exoribonuclease that plays an important role in tRNA 3'-end maturation. Removes nucleotide residues following the 3'-CCA terminus of tRNAs; can also add nucleotides to the ends of RNA molecules by using nucleoside diphosphates as substrates, but this may not be physiologically important. Probably plays a role in initiation of 16S rRNA degradation (leading to ribosome degradation) during starvation. The chain is Ribonuclease PH from Rhodococcus erythropolis (strain PR4 / NBRC 100887).